Consider the following 257-residue polypeptide: GTP cyclohydrolase FolE2 (257 aa).

It belongs to the GTP cyclohydrolase IV family.

The catalysed reaction is GTP + H2O = 7,8-dihydroneopterin 3'-triphosphate + formate + H(+). It functions in the pathway cofactor biosynthesis; 7,8-dihydroneopterin triphosphate biosynthesis; 7,8-dihydroneopterin triphosphate from GTP: step 1/1. Its function is as follows. Converts GTP to 7,8-dihydroneopterin triphosphate. This chain is GTP cyclohydrolase FolE2, found in Dictyoglomus turgidum (strain DSM 6724 / Z-1310).